We begin with the raw amino-acid sequence, 477 residues long: Proline--tRNA ligase (477 aa).

It belongs to the class-II aminoacyl-tRNA synthetase family. ProS type 3 subfamily. Homodimer.

It is found in the cytoplasm. The enzyme catalyses tRNA(Pro) + L-proline + ATP = L-prolyl-tRNA(Pro) + AMP + diphosphate. Its function is as follows. Catalyzes the attachment of proline to tRNA(Pro) in a two-step reaction: proline is first activated by ATP to form Pro-AMP and then transferred to the acceptor end of tRNA(Pro). In Lachnoclostridium phytofermentans (strain ATCC 700394 / DSM 18823 / ISDg) (Clostridium phytofermentans), this protein is Proline--tRNA ligase.